The sequence spans 444 residues: Glutamyl-tRNA(Gln) amidotransferase subunit D (444 aa).

The region spanning 92–424 (SEIKIISTGG…EKIQNLMITN (333 aa)) is the Asparaginase/glutaminase domain. Active-site residues include T102, T178, D179, and K257.

The protein belongs to the asparaginase 1 family. GatD subfamily. As to quaternary structure, heterodimer of GatD and GatE.

It carries out the reaction L-glutamyl-tRNA(Gln) + L-glutamine + ATP + H2O = L-glutaminyl-tRNA(Gln) + L-glutamate + ADP + phosphate + H(+). In terms of biological role, allows the formation of correctly charged Gln-tRNA(Gln) through the transamidation of misacylated Glu-tRNA(Gln) in organisms which lack glutaminyl-tRNA synthetase. The reaction takes place in the presence of glutamine and ATP through an activated gamma-phospho-Glu-tRNA(Gln). The GatDE system is specific for glutamate and does not act on aspartate. In Saccharolobus solfataricus (strain ATCC 35092 / DSM 1617 / JCM 11322 / P2) (Sulfolobus solfataricus), this protein is Glutamyl-tRNA(Gln) amidotransferase subunit D.